The sequence spans 260 residues: Acetylglutamate kinase (260 aa).

Residues 46–47 (GG), Arg-68, and Asn-160 each bind substrate.

Belongs to the acetylglutamate kinase family. ArgB subfamily.

Its subcellular location is the cytoplasm. It catalyses the reaction N-acetyl-L-glutamate + ATP = N-acetyl-L-glutamyl 5-phosphate + ADP. It participates in amino-acid biosynthesis; L-arginine biosynthesis; N(2)-acetyl-L-ornithine from L-glutamate: step 2/4. In terms of biological role, catalyzes the ATP-dependent phosphorylation of N-acetyl-L-glutamate. In Shewanella baltica (strain OS223), this protein is Acetylglutamate kinase.